Here is a 255-residue protein sequence, read N- to C-terminus: Triosephosphate isomerase (255 aa).

Position 9–11 (9–11 (NWK)) interacts with substrate. The active-site Electrophile is H95. E167 acts as the Proton acceptor in catalysis. Substrate-binding positions include G173, S212, and 233-234 (GG).

The protein belongs to the triosephosphate isomerase family. As to quaternary structure, homodimer.

Its subcellular location is the cytoplasm. The enzyme catalyses D-glyceraldehyde 3-phosphate = dihydroxyacetone phosphate. Its pathway is carbohydrate biosynthesis; gluconeogenesis. The protein operates within carbohydrate degradation; glycolysis; D-glyceraldehyde 3-phosphate from glycerone phosphate: step 1/1. Its function is as follows. Involved in the gluconeogenesis. Catalyzes stereospecifically the conversion of dihydroxyacetone phosphate (DHAP) to D-glyceraldehyde-3-phosphate (G3P). The protein is Triosephosphate isomerase of Klebsiella pneumoniae.